The primary structure comprises 54 residues: Large ribosomal subunit protein bL33 (54 aa).

The protein belongs to the bacterial ribosomal protein bL33 family.

In Xylella fastidiosa (strain M23), this protein is Large ribosomal subunit protein bL33.